Reading from the N-terminus, the 222-residue chain is V-type ATP synthase subunit D (222 aa).

It belongs to the V-ATPase D subunit family.

Produces ATP from ADP in the presence of a proton gradient across the membrane. This chain is V-type ATP synthase subunit D, found in Clostridioides difficile (strain 630) (Peptoclostridium difficile).